A 694-amino-acid chain; its full sequence is Maintenance of telomere capping protein 4 (694 aa).

Residues 1 to 12 (MTHTNEHDHKAE) are compositionally biased toward basic and acidic residues. Residues 1-26 (MTHTNEHDHKAEQQQNGRGDTTTETV) form a disordered region. The span at 13–26 (QQQNGRGDTTTETV) shows a compositional bias: polar residues. Ser85 bears the Phosphoserine mark. Positions 211-222 (YSPSNESSGSSS) are enriched in low complexity. Disordered stretches follow at residues 211 to 287 (YSPS…PEAQ), 325 to 437 (AKGS…TETY), and 465 to 511 (KTSN…PVGL). Residues 223 to 243 (SRRHHGHHIHPRRHLQHHSRV) are compositionally biased toward basic residues. The span at 244-257 (RTANSVHSNTQSLT) shows a compositional bias: polar residues. Thr263 is modified (phosphothreonine). Polar residues predominate over residues 276–287 (MITKIATTPEAQ). Over residues 403–417 (SNGGTSRRSSNNGES) the composition is skewed to low complexity. Residues 418 to 437 (ISTNSSKSSMGITFGNTETY) show a composition bias toward polar residues. A compositionally biased stretch (basic and acidic residues) spans 471–485 (LRAEGEQALESDKEL). Ser481 and Ser491 each carry phosphoserine. Phosphotyrosine is present on Tyr493. Residues 655-675 (RLLEFGIVLVLWTIWFLFSVL) form a helical membrane-spanning segment.

The protein resides in the membrane. It is found in the cytoplasm. This chain is Maintenance of telomere capping protein 4 (MTC4), found in Saccharomyces cerevisiae (strain ATCC 204508 / S288c) (Baker's yeast).